We begin with the raw amino-acid sequence, 426 residues long: Serine--tRNA ligase (426 aa).

Residue Thr233–Glu235 coordinates L-serine. Arg264–Glu266 serves as a coordination point for ATP. Glu287 lines the L-serine pocket. Residue Glu351–Ser354 coordinates ATP. L-serine is bound at residue Ser387.

Belongs to the class-II aminoacyl-tRNA synthetase family. Type-1 seryl-tRNA synthetase subfamily. As to quaternary structure, homodimer. The tRNA molecule binds across the dimer.

It is found in the cytoplasm. The catalysed reaction is tRNA(Ser) + L-serine + ATP = L-seryl-tRNA(Ser) + AMP + diphosphate + H(+). The enzyme catalyses tRNA(Sec) + L-serine + ATP = L-seryl-tRNA(Sec) + AMP + diphosphate + H(+). It functions in the pathway aminoacyl-tRNA biosynthesis; selenocysteinyl-tRNA(Sec) biosynthesis; L-seryl-tRNA(Sec) from L-serine and tRNA(Sec): step 1/1. Its function is as follows. Catalyzes the attachment of serine to tRNA(Ser). Is also able to aminoacylate tRNA(Sec) with serine, to form the misacylated tRNA L-seryl-tRNA(Sec), which will be further converted into selenocysteinyl-tRNA(Sec). The protein is Serine--tRNA ligase of Clostridium novyi (strain NT).